The sequence spans 193 residues: MSDTTELVDLAVIFPDLEIELKYACADNITGKAIYQQARCLLHKDAITALAKSISIAQLSGLQLVIYDAYRPQQAQAMLWQACPDPQYVVDVTVGSNHSRGTAIDLTLRDEHGNILDMGAGFDEMHERSHAYHPSVPPAAQRNRLLLNAIMTGGGFVGISSEWWHFELPQAASYPLLADQFSCFISPGTQHVS.

The Zn(2+) site is built by histidine 98 and aspartate 105. Glutamate 162 (proton donor/acceptor) is an active-site residue. Zn(2+) is bound at residue histidine 165.

This sequence belongs to the peptidase M15D family. It depends on Zn(2+) as a cofactor.

The protein localises to the cytoplasm. It catalyses the reaction D-alanyl-D-alanine + H2O = 2 D-alanine. Its function is as follows. Catalyzes hydrolysis of the D-alanyl-D-alanine dipeptide. May have a role in cell-wall turnover. The polypeptide is D-alanyl-D-alanine dipeptidase (Escherichia coli (strain K12)).